A 603-amino-acid chain; its full sequence is UvrABC system protein C (603 aa).

One can recognise a GIY-YIG domain in the interval 15-92; the sequence is DQPGCYLMKD…IKKHDPRFNI (78 aa). One can recognise a UVR domain in the interval 197-232; sequence KTVKNDLMKKMQVAAENMEFEKAGEFRDQINAIETT.

Belongs to the UvrC family. In terms of assembly, interacts with UvrB in an incision complex.

Its subcellular location is the cytoplasm. In terms of biological role, the UvrABC repair system catalyzes the recognition and processing of DNA lesions. UvrC both incises the 5' and 3' sides of the lesion. The N-terminal half is responsible for the 3' incision and the C-terminal half is responsible for the 5' incision. The chain is UvrABC system protein C from Listeria welshimeri serovar 6b (strain ATCC 35897 / DSM 20650 / CCUG 15529 / CIP 8149 / NCTC 11857 / SLCC 5334 / V8).